The chain runs to 506 residues: MSEIEKRNHGDCNILYKEIKKREQKLVNMKKEGFSFPNSFKKNTTSRKIYQKYQTKNRNELISLNIEVSIAGRMVQRRIMGKASFFTLQDIEGKIQIYINEKKISSDFYRFHFKKWDIGDILGVIGTLFKTKTGELSIYCKNVTILNKSLKPLPDKFHGLSNQEIRYRKRYLDLISNNKLYSIFKNRSNIITAIRNFMIENDFLEVETPMLQNIPGGANARPFITYHNEIDSQMYLRIAPELYLKKLIIGGFERIFELNRNFRNEGVSARHNPEFTMMEAYIAYSNYEDMMELTENLFKSITKFLFQDNKIIFNNNNFDFSQPFRRLTMTDSILEFNSTITSSDLKDFYKIREFAKSIGIKVEKKWGCGQIETEIFEKTVEKKLIQPTFITQYPVEVSPLARRNDINLNITDRFELFIGGYEIGNGFSELNDVEDQKTRFLNQIQKSNKEDNKNLFYDKEYIEALKYGLPPTSGLGIGIDRLIMILTNQISIRDVILFPTLRPFKK.

Mg(2+)-binding residues include glutamate 415 and glutamate 422.

This sequence belongs to the class-II aminoacyl-tRNA synthetase family. As to quaternary structure, homodimer. Requires Mg(2+) as cofactor.

The protein resides in the cytoplasm. The enzyme catalyses tRNA(Lys) + L-lysine + ATP = L-lysyl-tRNA(Lys) + AMP + diphosphate. The sequence is that of Lysine--tRNA ligase (lysS) from Buchnera aphidicola subsp. Acyrthosiphon pisum (strain APS) (Acyrthosiphon pisum symbiotic bacterium).